The sequence spans 184 residues: ATP synthase subunit b, chloroplastic (184 aa).

A helical membrane pass occupies residues 27 to 49 (LATNPINLSVVFGVLIFFGKGVL).

It belongs to the ATPase B chain family. F-type ATPases have 2 components, F(1) - the catalytic core - and F(0) - the membrane proton channel. F(1) has five subunits: alpha(3), beta(3), gamma(1), delta(1), epsilon(1). F(0) has four main subunits: a(1), b(1), b'(1) and c(10-14). The alpha and beta chains form an alternating ring which encloses part of the gamma chain. F(1) is attached to F(0) by a central stalk formed by the gamma and epsilon chains, while a peripheral stalk is formed by the delta, b and b' chains.

It is found in the plastid. The protein resides in the chloroplast thylakoid membrane. F(1)F(0) ATP synthase produces ATP from ADP in the presence of a proton or sodium gradient. F-type ATPases consist of two structural domains, F(1) containing the extramembraneous catalytic core and F(0) containing the membrane proton channel, linked together by a central stalk and a peripheral stalk. During catalysis, ATP synthesis in the catalytic domain of F(1) is coupled via a rotary mechanism of the central stalk subunits to proton translocation. Its function is as follows. Component of the F(0) channel, it forms part of the peripheral stalk, linking F(1) to F(0). In Lobularia maritima (Sweet alyssum), this protein is ATP synthase subunit b, chloroplastic.